The primary structure comprises 587 residues: Succinate dehydrogenase flavoprotein subunit (587 aa).

Residues glycine 15–glycine 20, serine 39–glycine 54, and aspartate 223 each bind FAD. Position 47 is a tele-8alpha-FAD histidine (histidine 47). Substrate contacts are provided by histidine 244 and threonine 256. Arginine 288 acts as the Proton acceptor in catalysis. Histidine 355 contributes to the substrate binding site. Position 389 (glutamate 389) interacts with FAD. Position 400 (arginine 400) interacts with substrate. Serine 405–leucine 406 contributes to the FAD binding site.

The protein belongs to the FAD-dependent oxidoreductase 2 family. FRD/SDH subfamily. In terms of assembly, part of an enzyme complex containing four subunits: a flavoprotein, an iron-sulfur protein, cytochrome b-556 and a hydrophobic protein. Requires FAD as cofactor.

Its subcellular location is the cell inner membrane. It carries out the reaction a quinone + succinate = fumarate + a quinol. Its pathway is carbohydrate metabolism; tricarboxylic acid cycle; fumarate from succinate (bacterial route): step 1/1. The sequence is that of Succinate dehydrogenase flavoprotein subunit (sdhA) from Coxiella burnetii (strain RSA 493 / Nine Mile phase I).